Here is a 236-residue protein sequence, read N- to C-terminus: 2-C-methyl-D-erythritol 4-phosphate cytidylyltransferase (236 aa).

The protein belongs to the IspD/TarI cytidylyltransferase family. IspD subfamily.

It carries out the reaction 2-C-methyl-D-erythritol 4-phosphate + CTP + H(+) = 4-CDP-2-C-methyl-D-erythritol + diphosphate. It participates in isoprenoid biosynthesis; isopentenyl diphosphate biosynthesis via DXP pathway; isopentenyl diphosphate from 1-deoxy-D-xylulose 5-phosphate: step 2/6. In terms of biological role, catalyzes the formation of 4-diphosphocytidyl-2-C-methyl-D-erythritol from CTP and 2-C-methyl-D-erythritol 4-phosphate (MEP). The sequence is that of 2-C-methyl-D-erythritol 4-phosphate cytidylyltransferase from Burkholderia pseudomallei (strain 1106a).